Here is a 154-residue protein sequence, read N- to C-terminus: 6,7-dimethyl-8-ribityllumazine synthase (154 aa).

Residues Phe21, 55-57 (AFE), and 79-81 (CVI) contribute to the 5-amino-6-(D-ribitylamino)uracil site. Residue 84–85 (AT) coordinates (2S)-2-hydroxy-3-oxobutyl phosphate. The Proton donor role is filled by His87. Phe112 provides a ligand contact to 5-amino-6-(D-ribitylamino)uracil. Arg126 contacts (2S)-2-hydroxy-3-oxobutyl phosphate.

This sequence belongs to the DMRL synthase family. Forms an icosahedral capsid composed of 60 subunits, arranged as a dodecamer of pentamers.

The catalysed reaction is (2S)-2-hydroxy-3-oxobutyl phosphate + 5-amino-6-(D-ribitylamino)uracil = 6,7-dimethyl-8-(1-D-ribityl)lumazine + phosphate + 2 H2O + H(+). It functions in the pathway cofactor biosynthesis; riboflavin biosynthesis; riboflavin from 2-hydroxy-3-oxobutyl phosphate and 5-amino-6-(D-ribitylamino)uracil: step 1/2. In terms of biological role, catalyzes the formation of 6,7-dimethyl-8-ribityllumazine by condensation of 5-amino-6-(D-ribitylamino)uracil with 3,4-dihydroxy-2-butanone 4-phosphate. This is the penultimate step in the biosynthesis of riboflavin. The polypeptide is 6,7-dimethyl-8-ribityllumazine synthase (Staphylococcus aureus (strain MRSA252)).